Here is a 359-residue protein sequence, read N- to C-terminus: UDP-N-acetylglucosamine--N-acetylmuramyl-(pentapeptide) pyrophosphoryl-undecaprenol N-acetylglucosamine transferase (359 aa).

UDP-N-acetyl-alpha-D-glucosamine contacts are provided by residues 15–17, asparagine 127, arginine 166, serine 191, isoleucine 245, 264–269, and glutamine 290; these read TGG and ALTVSE.

This sequence belongs to the glycosyltransferase 28 family. MurG subfamily.

It localises to the cell inner membrane. The catalysed reaction is di-trans,octa-cis-undecaprenyl diphospho-N-acetyl-alpha-D-muramoyl-L-alanyl-D-glutamyl-meso-2,6-diaminopimeloyl-D-alanyl-D-alanine + UDP-N-acetyl-alpha-D-glucosamine = di-trans,octa-cis-undecaprenyl diphospho-[N-acetyl-alpha-D-glucosaminyl-(1-&gt;4)]-N-acetyl-alpha-D-muramoyl-L-alanyl-D-glutamyl-meso-2,6-diaminopimeloyl-D-alanyl-D-alanine + UDP + H(+). It participates in cell wall biogenesis; peptidoglycan biosynthesis. In terms of biological role, cell wall formation. Catalyzes the transfer of a GlcNAc subunit on undecaprenyl-pyrophosphoryl-MurNAc-pentapeptide (lipid intermediate I) to form undecaprenyl-pyrophosphoryl-MurNAc-(pentapeptide)GlcNAc (lipid intermediate II). The chain is UDP-N-acetylglucosamine--N-acetylmuramyl-(pentapeptide) pyrophosphoryl-undecaprenol N-acetylglucosamine transferase from Pseudomonas putida (strain ATCC 47054 / DSM 6125 / CFBP 8728 / NCIMB 11950 / KT2440).